The primary structure comprises 901 residues: Alanine--tRNA ligase (901 aa).

4 residues coordinate Zn(2+): His-581, His-585, Cys-684, and His-688.

It belongs to the class-II aminoacyl-tRNA synthetase family. The cofactor is Zn(2+).

The protein localises to the cytoplasm. It carries out the reaction tRNA(Ala) + L-alanine + ATP = L-alanyl-tRNA(Ala) + AMP + diphosphate. Its function is as follows. Catalyzes the attachment of alanine to tRNA(Ala) in a two-step reaction: alanine is first activated by ATP to form Ala-AMP and then transferred to the acceptor end of tRNA(Ala). Also edits incorrectly charged Ser-tRNA(Ala) and Gly-tRNA(Ala) via its editing domain. The polypeptide is Alanine--tRNA ligase (Mycobacterium marinum (strain ATCC BAA-535 / M)).